A 191-amino-acid polypeptide reads, in one-letter code: Large ribosomal subunit protein uL5 (191 aa).

This sequence belongs to the universal ribosomal protein uL5 family. As to quaternary structure, part of the 50S ribosomal subunit; part of the 5S rRNA/L5/L18/L25 subcomplex. Contacts the 5S rRNA and the P site tRNA. Forms a bridge to the 30S subunit in the 70S ribosome.

This is one of the proteins that bind and probably mediate the attachment of the 5S RNA into the large ribosomal subunit, where it forms part of the central protuberance. In the 70S ribosome it contacts protein S13 of the 30S subunit (bridge B1b), connecting the 2 subunits; this bridge is implicated in subunit movement. Contacts the P site tRNA; the 5S rRNA and some of its associated proteins might help stabilize positioning of ribosome-bound tRNAs. This Micrococcus luteus (strain ATCC 4698 / DSM 20030 / JCM 1464 / CCM 169 / CCUG 5858 / IAM 1056 / NBRC 3333 / NCIMB 9278 / NCTC 2665 / VKM Ac-2230) (Micrococcus lysodeikticus) protein is Large ribosomal subunit protein uL5.